An 839-amino-acid chain; its full sequence is Probable beta-glucosidase I (839 aa).

A glycan (N-linked (GlcNAc...) asparagine) is linked at Asn-197. Asp-225 is an active-site residue. One can recognise a PA14 domain in the interval 395–555 (DGKTGFSFKV…GQEELISNAV (161 aa)). Residue Asn-620 is glycosylated (N-linked (GlcNAc...) asparagine).

This sequence belongs to the glycosyl hydrolase 3 family.

The protein resides in the secreted. It catalyses the reaction Hydrolysis of terminal, non-reducing beta-D-glucosyl residues with release of beta-D-glucose.. Its pathway is glycan metabolism; cellulose degradation. In terms of biological role, beta-glucosidases are one of a number of cellulolytic enzymes involved in the degradation of cellulosic biomass. Catalyzes the last step releasing glucose from the inhibitory cellobiose. This chain is Probable beta-glucosidase I (bglI), found in Aspergillus oryzae (strain ATCC 42149 / RIB 40) (Yellow koji mold).